Consider the following 340-residue polypeptide: tRNA N6-adenosine threonylcarbamoyltransferase (340 aa).

Residues histidine 115 and histidine 119 each coordinate Fe cation. Substrate-binding positions include 138-142, aspartate 171, glycine 184, aspartate 188, and asparagine 278; that span reads VVSGG. Aspartate 306 is a binding site for Fe cation.

Belongs to the KAE1 / TsaD family. The cofactor is Fe(2+).

It localises to the cytoplasm. The catalysed reaction is L-threonylcarbamoyladenylate + adenosine(37) in tRNA = N(6)-L-threonylcarbamoyladenosine(37) in tRNA + AMP + H(+). In terms of biological role, required for the formation of a threonylcarbamoyl group on adenosine at position 37 (t(6)A37) in tRNAs that read codons beginning with adenine. Is involved in the transfer of the threonylcarbamoyl moiety of threonylcarbamoyl-AMP (TC-AMP) to the N6 group of A37, together with TsaE and TsaB. TsaD likely plays a direct catalytic role in this reaction. This Clostridium botulinum (strain Kyoto / Type A2) protein is tRNA N6-adenosine threonylcarbamoyltransferase.